Here is a 109-residue protein sequence, read N- to C-terminus: Class I hydrophobin G (109 aa).

Residues 1–19 (MRLSILSVFSLVGAGMVSA) form the signal peptide. 4 disulfide bridges follow: cysteine 36–cysteine 90, cysteine 42–cysteine 84, cysteine 43–cysteine 76, and cysteine 91–cysteine 105.

This sequence belongs to the fungal hydrophobin family.

The protein localises to the secreted. The protein resides in the cell wall. In terms of biological role, aerial growth, conidiation, and dispersal of filamentous fungi in the environment rely upon a capability of their secreting small amphipathic proteins called hydrophobins (HPBs) with low sequence identity. Class I can self-assemble into an outermost layer of rodlet bundles on aerial cell surfaces, conferring cellular hydrophobicity that supports fungal growth, development and dispersal; whereas Class II form highly ordered films at water-air interfaces through intermolecular interactions but contribute nothing to the rodlet structure. In P.expansum, hydrophobins contribute to germination, tolerance to cold stress and mycotoxins patulin and citrinin production. The chain is Class I hydrophobin G from Penicillium expansum (Blue mold rot fungus).